Reading from the N-terminus, the 179-residue chain is Large ribosomal subunit protein uL5 (179 aa).

It belongs to the universal ribosomal protein uL5 family. As to quaternary structure, part of the 50S ribosomal subunit; part of the 5S rRNA/L5/L18/L25 subcomplex. Contacts the 5S rRNA and the P site tRNA. Forms a bridge to the 30S subunit in the 70S ribosome.

Functionally, this is one of the proteins that bind and probably mediate the attachment of the 5S RNA into the large ribosomal subunit, where it forms part of the central protuberance. In the 70S ribosome it contacts protein S13 of the 30S subunit (bridge B1b), connecting the 2 subunits; this bridge is implicated in subunit movement. Contacts the P site tRNA; the 5S rRNA and some of its associated proteins might help stabilize positioning of ribosome-bound tRNAs. This Prochlorococcus marinus (strain AS9601) protein is Large ribosomal subunit protein uL5.